The primary structure comprises 179 residues: Large ribosomal subunit protein uL6 (179 aa).

This sequence belongs to the universal ribosomal protein uL6 family. In terms of assembly, part of the 50S ribosomal subunit.

This protein binds to the 23S rRNA, and is important in its secondary structure. It is located near the subunit interface in the base of the L7/L12 stalk, and near the tRNA binding site of the peptidyltransferase center. This chain is Large ribosomal subunit protein uL6, found in Rhodococcus jostii (strain RHA1).